Reading from the N-terminus, the 260-residue chain is UPF0294 protein plu0699 (260 aa).

It belongs to the UPF0294 family.

It localises to the cytoplasm. This is UPF0294 protein plu0699 from Photorhabdus laumondii subsp. laumondii (strain DSM 15139 / CIP 105565 / TT01) (Photorhabdus luminescens subsp. laumondii).